We begin with the raw amino-acid sequence, 126 residues long: Protein ApaG (126 aa).

The region spanning 2 to 126 (SDSRYKVDVS…FRLAVPGSLH (125 aa)) is the ApaG domain.

The sequence is that of Protein ApaG from Pseudomonas syringae pv. tomato (strain ATCC BAA-871 / DC3000).